The chain runs to 350 residues: Deoxyribonuclease-2-alpha (350 aa).

The N-terminal stretch at M1 to A19 is a signal peptide. C22 and C162 are joined by a disulfide. 4 N-linked (GlcNAc...) asparagine glycosylation sites follow: N89, N215, N269, and N293. Intrachain disulfides connect C270/C350 and C311/C330. H298 is a catalytic residue.

Belongs to the DNase II family. In terms of tissue distribution, ubiquitous.

The protein resides in the lysosome. It carries out the reaction Endonucleolytic cleavage to nucleoside 3'-phosphates and 3'-phosphooligonucleotide end-products.. Its function is as follows. Hydrolyzes DNA under acidic conditions with a preference for double-stranded DNA. Plays a major role in the clearance of nucleic acids generated through apoptosis, hence preventing autoinflammation. Necessary for proper fetal development and for definitive erythropoiesis in fetal liver and bone marrow, where it degrades nuclear DNA expelled from erythroid precursor cells. In Rattus norvegicus (Rat), this protein is Deoxyribonuclease-2-alpha (Dnase2).